The primary structure comprises 299 residues: Aliphatic sulfonates import ATP-binding protein SsuB (299 aa).

The ABC transporter domain occupies 36–257 (LHVQQVIKRY…QHGSAAFAQI (222 aa)). ATP is bound at residue 68 to 75 (GRSGCGKS).

The protein belongs to the ABC transporter superfamily. Aliphatic sulfonates importer (TC 3.A.1.17.2) family. As to quaternary structure, the complex is composed of two ATP-binding proteins (SsuB), two transmembrane proteins (SsuC) and a solute-binding protein (SsuA).

Its subcellular location is the cell inner membrane. The catalysed reaction is ATP + H2O + aliphatic sulfonate-[sulfonate-binding protein]Side 1 = ADP + phosphate + aliphatic sulfonateSide 2 + [sulfonate-binding protein]Side 1.. Its function is as follows. Part of the ABC transporter complex SsuABC involved in aliphatic sulfonates import. Responsible for energy coupling to the transport system. This chain is Aliphatic sulfonates import ATP-binding protein SsuB, found in Cupriavidus pinatubonensis (strain JMP 134 / LMG 1197) (Cupriavidus necator (strain JMP 134)).